We begin with the raw amino-acid sequence, 352 residues long: tRNA N6-adenosine threonylcarbamoyltransferase (352 aa).

3 residues coordinate a divalent metal cation: histidine 114, histidine 118, and tyrosine 135. Substrate is bound by residues 135–139 (YVSGG), aspartate 167, glycine 182, glutamate 186, and asparagine 283. Aspartate 311 provides a ligand contact to a divalent metal cation.

This sequence belongs to the KAE1 / TsaD family. In terms of assembly, component of the EKC/KEOPS complex composed of at least BUD32, CGI121, GON7, KAE1 and PCC1; the whole complex dimerizes. A divalent metal cation serves as cofactor.

Its subcellular location is the cytoplasm. The protein resides in the nucleus. It catalyses the reaction L-threonylcarbamoyladenylate + adenosine(37) in tRNA = N(6)-L-threonylcarbamoyladenosine(37) in tRNA + AMP + H(+). Its function is as follows. Component of the EKC/KEOPS complex that is required for the formation of a threonylcarbamoyl group on adenosine at position 37 (t(6)A37) in tRNAs that read codons beginning with adenine. The complex is probably involved in the transfer of the threonylcarbamoyl moiety of threonylcarbamoyl-AMP (TC-AMP) to the N6 group of A37. KAE1 likely plays a direct catalytic role in this reaction, but requires other protein(s) of the complex to fulfill this activity. The EKC/KEOPS complex also promotes both telomere uncapping and telomere elongation. The complex is required for efficient recruitment of transcriptional coactivators. The protein is tRNA N6-adenosine threonylcarbamoyltransferase of Phaeosphaeria nodorum (strain SN15 / ATCC MYA-4574 / FGSC 10173) (Glume blotch fungus).